The sequence spans 281 residues: MMQFFGTIVTKEEPVNLELDEGDIFHLTKAIIHPKSQGKGKVYLTAVISLMEEDEMEEDDVDDEEESPREDIVEIPIGILEAGKIDQIDLNLHYNFGQIVRFELQAENGAGYVVALSGSVITMEQGGCDDEDCDDEHCINHEDDEEIDSDEEFGDSDQDEEDSDDEEIPQLIAPATKKGKITEISEVPESKKEKTPEPKKVPEPKKEQVKQPTQPQQKKAAAQQPEKANNKPAAASPAKPQNNQSKNAPKQPQQQQQSPAKNNNNKRPQNQNENNKKKQKN.

Residues 142 to 168 show a composition bias toward acidic residues; sequence EDDEEIDSDEEFGDSDQDEEDSDDEEI. Positions 142-281 are disordered; the sequence is EDDEEIDSDE…NENNKKKQKN (140 aa). A compositionally biased stretch (basic and acidic residues) spans 180–209; it reads KITEISEVPESKKEKTPEPKKVPEPKKEQV. The segment covering 210–273 has biased composition (low complexity); it reads KQPTQPQQKK…NNKRPQNQNE (64 aa).

The protein is 32 kDa heat shock protein (hspC) of Dictyostelium discoideum (Social amoeba).